The chain runs to 299 residues: Protease HtpX homolog (299 aa).

Helical transmembrane passes span Ile15–Phe35 and Gly39–Phe59. A Zn(2+)-binding site is contributed by His143. Residue Glu144 is part of the active site. Residue His147 participates in Zn(2+) binding. The next 2 helical transmembrane spans lie at Ile158–Trp178 and Ile198–Val218. Residue Glu227 participates in Zn(2+) binding.

This sequence belongs to the peptidase M48B family. Requires Zn(2+) as cofactor.

It is found in the cell membrane. The protein is Protease HtpX homolog of Streptococcus pneumoniae serotype 4 (strain ATCC BAA-334 / TIGR4).